Reading from the N-terminus, the 221-residue chain is Chalcone--flavanone isomerase (221 aa).

3 residues coordinate substrate: Thr52, Asn117, and Ser193.

The protein belongs to the chalcone isomerase family. In terms of tissue distribution, flowers.

It carries out the reaction a chalcone = a flavanone.. The protein operates within secondary metabolite biosynthesis; flavonoid biosynthesis. Catalyzes the intramolecular cyclization of bicyclic chalcones into tricyclic (S)-flavanones. Responsible for the isomerization of 4,2',4',6'-tetrahydroxychalcone (also termed chalcone) into naringenin. This is Chalcone--flavanone isomerase (CHI) from Gentiana triflora (Clustered gentian).